A 143-amino-acid polypeptide reads, in one-letter code: Ribosome-binding factor A (143 aa).

The interval aspartate 123 to arginine 143 is disordered.

The protein belongs to the RbfA family. In terms of assembly, monomer. Binds 30S ribosomal subunits, but not 50S ribosomal subunits or 70S ribosomes.

It localises to the cytoplasm. One of several proteins that assist in the late maturation steps of the functional core of the 30S ribosomal subunit. Associates with free 30S ribosomal subunits (but not with 30S subunits that are part of 70S ribosomes or polysomes). Required for efficient processing of 16S rRNA. May interact with the 5'-terminal helix region of 16S rRNA. In Francisella tularensis subsp. mediasiatica (strain FSC147), this protein is Ribosome-binding factor A.